The chain runs to 277 residues: Protein EURL homolog (277 aa).

The disordered stretch occupies residues 173–201 (LGLWPGERPQNREQRDSRQRRHSGHSREE). Residues 197 to 229 (HSREELMRKNVEELRQLNEQLLLQIQNVFEELS) adopt a coiled-coil conformation.

Belongs to the EURL family.

In terms of biological role, plays a role in cortical progenitor cell proliferation and differentiation. May promote dendritic spine development of post-migratory cortical projection neurons by modulating the beta-catenin signaling pathway. This is Protein EURL homolog from Danio rerio (Zebrafish).